The primary structure comprises 1353 residues: Adenylate cyclase type 9 (1353 aa).

2 disordered regions span residues 1–27 and 51–73; these read MASS…DSNS and SSSC…GGRL. At 1-117 the chain is on the cytoplasmic side; that stretch reads MASSPHQQLL…CFPQTQRRFR (117 aa). Polar residues predominate over residues 16 to 27; that stretch reads EVSCDSSGDSNS. Residues 51–66 show a composition bias toward low complexity; that stretch reads SSSCSSSGDSGGLPRR. Residues 118–138 traverse the membrane as a helical segment; it reads YALFYVGFACLLWSIYFAVHM. Over 139 to 141 the chain is Extracellular; that stretch reads KSK. A helical transmembrane segment spans residues 142 to 162; sequence VIVMVVPALCFLVVCVGFFLF. The Cytoplasmic segment spans residues 163–171; sequence TFTKLYARH. Residues 172–192 traverse the membrane as a helical segment; it reads YAWTSLALTLLVFALTLAAQF. Residues 193 to 215 lie on the Extracellular side of the membrane; sequence QVWTPLSGRVDSSNHTLTATPAD. N206 carries N-linked (GlcNAc...) asparagine glycosylation. The chain crosses the membrane as a helical span at residues 216–235; sequence TCLSQVGSFSICIEVLLLLY. The Cytoplasmic segment spans residues 236–241; the sequence is TVMQLP. The chain crosses the membrane as a helical span at residues 242 to 259; sequence LYLSLFLGVVYSVLFETF. Over 260-280 the chain is Extracellular; that stretch reads GYHFRNEDCYPSPGPGALHWE. The helical transmembrane segment at 281-301 threads the bilayer; the sequence is LLSRALLHVCIHAIGIHLFVM. Topologically, residues 302-786 are cytoplasmic; sequence SQVRSRSTFL…VKTFASATFS (485 aa). Positions 349–375 are disordered; sequence QGDEESENSVKRHATSSPKNRKKKSSI. The segment covering 359–374 has biased composition (basic residues); it reads KRHATSSPKNRKKKSS. Positions 399, 400, and 443 each coordinate Mg(2+). ATP-binding positions include 399–404, 441–443, and R487; these read DIVGFT and LGD. 2 disordered regions span residues 596-615 and 641-685; these read DSRE…GSVS and SEAG…EEKL. Phosphoserine is present on residues S610 and S613. Residues 661-676 are compositionally biased toward polar residues; that stretch reads STKASGGPNSKTQNGL. Phosphoserine occurs at positions 688, 691, and 706. A helical membrane pass occupies residues 787–807; that stretch reads SLLDVFLSTTVFLILSITCFL. The Extracellular segment spans residues 808–818; sequence KYGATATPPPP. Residues 819-839 form a helical membrane-spanning segment; sequence AALAVFGADLLLEVLSLIVSI. Over 840-867 the chain is Cytoplasmic; the sequence is RMVFFLEDVMTCTKWLLEWIAGWLPRHC. A helical membrane pass occupies residues 868 to 888; sequence IGAILVSLPALAVYSHITSEF. Over 889 to 891 the chain is Extracellular; it reads ETN. A helical transmembrane segment spans residues 892–912; sequence IHVTMFTGSAVLVAVVHYCNF. Residues 913 to 920 are Cytoplasmic-facing; it reads CQLSSWMR. Residues 921-941 form a helical membrane-spanning segment; that stretch reads SSLATIVGAGLLLLLHISLCQ. The Extracellular portion of the chain corresponds to 942–975; the sequence is DSSIVMSPLDSAQNFSAQRNPCNSSVLQDGRRPA. N-linked (GlcNAc...) asparagine glycans are attached at residues N955 and N964. A helical membrane pass occupies residues 976–996; that stretch reads SLIGKELILTFFLLLLLVWFL. Residues 997-1353 are Cytoplasmic-facing; the sequence is NREFEVSYRL…LSKLNVSKSV (357 aa). ATP is bound by residues K1108, 1185-1187, 1192-1196, and K1232; these read DIW and NIASR. A phosphoserine mark is found at S1257, S1259, S1295, S1307, and S1332. The segment at 1290-1314 is disordered; the sequence is KASLGSDDSTQAKEARLSSKRSWRE. A compositionally biased stretch (basic and acidic residues) spans 1299–1314; that stretch reads TQAKEARLSSKRSWRE.

Belongs to the adenylyl cyclase class-4/guanylyl cyclase family. The cofactor is Mg(2+). Mn(2+) is required as a cofactor. In terms of tissue distribution, detected in brain, spleen, lung, liver and testis (at protein level). Detected in brain, especially in hippocampus, cerebellum and neocortex. Found in decreasing order in skeletal muscle, heart, adrenal gland, ovary and brain; and to a lesser extent, in kidney, liver, testis, lung, thymus and spleen.

Its subcellular location is the cell membrane. The enzyme catalyses ATP = 3',5'-cyclic AMP + diphosphate. Insensitive to calcium/calmodulin, forskolin and somatostatin. Stimulated by beta-adrenergic receptor activation. Activity is down-regulated by calcium/calcineurin. In terms of biological role, adenylyl cyclase that catalyzes the formation of the signaling molecule cAMP in response to activation of G protein-coupled receptors. Contributes to signaling cascades activated by CRH (corticotropin-releasing factor), corticosteroids and by beta-adrenergic receptors. This Mus musculus (Mouse) protein is Adenylate cyclase type 9 (Adcy9).